The following is a 444-amino-acid chain: MARSRSRIDRTPFQTEILDLSHDGRGVARREGEGGKVTFVSGALPGEVVMAEQTARSRHFDEARTVEVLKASPQRVTPKCPHFGTCAGCVLQHLDEDQQIVAKQRVLMDNLERIGHVKPGTVLAPLVGESWGYRRKGRFSVRRVEKKDKTLVGFREQDPRFVADLSQCLTVIPEIGTKVEALSTFIESLDGKRDIPQIEFIAGDQAVVLTVRHLQPLSDADRAAWATFGQQHGFVIYLQSGGVDTVQPLDGQGVPLSFRLAPWDVELAFRPLDFIQVNAKLNEKMIAHALDLLEPGEDERVLDLFCGLGNFTLPLARRVREVVGVEGDAGLVARARENAERNGLANAQFFSADLTQDQRSTAWMRQGFDKLLLDPPRSGAIEVLQQLPLKQFKRIVYVSCHPGSLARDAGYLVNEQGFTLVSAGAMDMFPHTAHVESIAVFEKR.

The region spanning Arg5–Glu67 is the TRAM domain. [4Fe-4S] cluster contacts are provided by Cys80, Cys86, Cys89, and Cys168. 6 residues coordinate S-adenosyl-L-methionine: Gln276, Phe305, Asn310, Glu326, Asp353, and Asp374. Residue Cys400 is the Nucleophile of the active site.

Belongs to the class I-like SAM-binding methyltransferase superfamily. RNA M5U methyltransferase family. RlmD subfamily.

It catalyses the reaction uridine(1939) in 23S rRNA + S-adenosyl-L-methionine = 5-methyluridine(1939) in 23S rRNA + S-adenosyl-L-homocysteine + H(+). In terms of biological role, catalyzes the formation of 5-methyl-uridine at position 1939 (m5U1939) in 23S rRNA. The polypeptide is 23S rRNA (uracil(1939)-C(5))-methyltransferase RlmD (Stenotrophomonas maltophilia (strain R551-3)).